The primary structure comprises 361 residues: Aromatic amino acid aminotransferase (361 aa).

Lysine 221 carries the N6-(pyridoxal phosphate)lysine modification.

Belongs to the class-II pyridoxal-phosphate-dependent aminotransferase family. In terms of assembly, homodimer. Pyridoxal 5'-phosphate is required as a cofactor.

The enzyme catalyses an aromatic L-alpha-amino acid + 2-oxoglutarate = an aromatic oxo-acid + L-glutamate. Aminotransferase that catalyzes the conversion of aromatic amino acids and 2-oxoglutarate into corresponding aromatic oxo acids and L-glutamate. The polypeptide is Aromatic amino acid aminotransferase (Mycobacterium ulcerans (strain Agy99)).